The sequence spans 382 residues: UDP-4-amino-4-deoxy-L-arabinose--oxoglutarate aminotransferase (382 aa).

K183 bears the N6-(pyridoxal phosphate)lysine mark.

This sequence belongs to the DegT/DnrJ/EryC1 family. ArnB subfamily. Homodimer. Pyridoxal 5'-phosphate is required as a cofactor.

It catalyses the reaction UDP-4-amino-4-deoxy-beta-L-arabinose + 2-oxoglutarate = UDP-beta-L-threo-pentopyranos-4-ulose + L-glutamate. It participates in nucleotide-sugar biosynthesis; UDP-4-deoxy-4-formamido-beta-L-arabinose biosynthesis; UDP-4-deoxy-4-formamido-beta-L-arabinose from UDP-alpha-D-glucuronate: step 2/3. It functions in the pathway bacterial outer membrane biogenesis; lipopolysaccharide biosynthesis. Functionally, catalyzes the conversion of UDP-4-keto-arabinose (UDP-Ara4O) to UDP-4-amino-4-deoxy-L-arabinose (UDP-L-Ara4N). The modified arabinose is attached to lipid A and is required for resistance to polymyxin and cationic antimicrobial peptides. This chain is UDP-4-amino-4-deoxy-L-arabinose--oxoglutarate aminotransferase, found in Pseudomonas syringae pv. syringae (strain B728a).